Here is a 453-residue protein sequence, read N- to C-terminus: uncharacterized protein (453 aa).

Cys-74, Cys-80, Cys-83, and Cys-162 together coordinate [4Fe-4S] cluster. Residues Gln-286, Tyr-315, Glu-336, and Asp-384 each contribute to the S-adenosyl-L-methionine site. Cys-411 serves as the catalytic Nucleophile.

This sequence belongs to the class I-like SAM-binding methyltransferase superfamily. RNA M5U methyltransferase family.

This is an uncharacterized protein from Staphylococcus aureus (strain MRSA252).